We begin with the raw amino-acid sequence, 359 residues long: 1-deoxy-D-xylulose 5-phosphate reductoisomerase (359 aa).

NADPH is bound by residues threonine 7, glycine 8, serine 9, isoleucine 10, alanine 31, asparagine 33, and asparagine 111. Lysine 112 is a binding site for 1-deoxy-D-xylulose 5-phosphate. Glutamate 113 is a binding site for NADPH. Aspartate 131 provides a ligand contact to Mn(2+). Residues serine 132, glutamate 133, serine 155, and histidine 178 each coordinate 1-deoxy-D-xylulose 5-phosphate. Glutamate 133 is a binding site for Mn(2+). Glycine 184 provides a ligand contact to NADPH. The 1-deoxy-D-xylulose 5-phosphate site is built by serine 191, asparagine 196, lysine 197, and glutamate 200. Glutamate 200 lines the Mn(2+) pocket.

The protein belongs to the DXR family. Mg(2+) is required as a cofactor. It depends on Mn(2+) as a cofactor.

It carries out the reaction 2-C-methyl-D-erythritol 4-phosphate + NADP(+) = 1-deoxy-D-xylulose 5-phosphate + NADPH + H(+). The protein operates within isoprenoid biosynthesis; isopentenyl diphosphate biosynthesis via DXP pathway; isopentenyl diphosphate from 1-deoxy-D-xylulose 5-phosphate: step 1/6. Functionally, catalyzes the NADPH-dependent rearrangement and reduction of 1-deoxy-D-xylulose-5-phosphate (DXP) to 2-C-methyl-D-erythritol 4-phosphate (MEP). This is 1-deoxy-D-xylulose 5-phosphate reductoisomerase from Campylobacter hominis (strain ATCC BAA-381 / DSM 21671 / CCUG 45161 / LMG 19568 / NCTC 13146 / CH001A).